Here is a 126-residue protein sequence, read N- to C-terminus: Arginine decarboxylase proenzyme (126 aa).

Serine 74 acts as the Schiff-base intermediate with substrate; via pyruvic acid in catalysis. Serine 74 carries the pyruvic acid (Ser); by autocatalysis modification. Catalysis depends on histidine 79, which acts as the Proton acceptor; for processing activity. Cysteine 94 (proton donor; for catalytic activity) is an active-site residue.

Belongs to the prokaryotic AdoMetDC family. Type 1 subfamily. Heterooctamer of four alpha and four beta chains arranged as a tetramer of alpha/beta heterodimers. It depends on pyruvate as a cofactor. Is synthesized initially as an inactive proenzyme. Formation of the active enzyme involves a self-maturation process in which the active site pyruvoyl group is generated from an internal serine residue via an autocatalytic post-translational modification. Two non-identical subunits are generated from the proenzyme in this reaction, and the pyruvate is formed at the N-terminus of the alpha chain, which is derived from the carboxyl end of the proenzyme. The post-translation cleavage follows an unusual pathway, termed non-hydrolytic serinolysis, in which the side chain hydroxyl group of the serine supplies its oxygen atom to form the C-terminus of the beta chain, while the remainder of the serine residue undergoes an oxidative deamination to produce ammonia and the pyruvoyl group blocking the N-terminus of the alpha chain.

The enzyme catalyses L-arginine + H(+) = agmatine + CO2. The protein operates within amine and polyamine biosynthesis; agmatine biosynthesis; agmatine from L-arginine: step 1/1. Specifically catalyzes the decarboxylation of L-arginine to agmatine. Has no S-adenosylmethionine decarboxylase (AdoMetDC) activity. The chain is Arginine decarboxylase proenzyme from Pyrobaculum calidifontis (strain DSM 21063 / JCM 11548 / VA1).